The chain runs to 230 residues: Triosephosphate isomerase (230 aa).

Residue 9–11 (NYK) participates in substrate binding. H93 (electrophile) is an active-site residue. The Proton acceptor role is filled by E141. Substrate is bound by residues I146, G180, and 201 to 202 (AS).

The protein belongs to the triosephosphate isomerase family. As to quaternary structure, homotetramer; dimer of dimers.

It is found in the cytoplasm. It carries out the reaction D-glyceraldehyde 3-phosphate = dihydroxyacetone phosphate. It participates in carbohydrate biosynthesis; gluconeogenesis. The protein operates within carbohydrate degradation; glycolysis; D-glyceraldehyde 3-phosphate from glycerone phosphate: step 1/1. Involved in the gluconeogenesis. Catalyzes stereospecifically the conversion of dihydroxyacetone phosphate (DHAP) to D-glyceraldehyde-3-phosphate (G3P). In Sulfolobus acidocaldarius (strain ATCC 33909 / DSM 639 / JCM 8929 / NBRC 15157 / NCIMB 11770), this protein is Triosephosphate isomerase.